Consider the following 275-residue polypeptide: Mitochondrial outer membrane porin (275 aa).

Belongs to the eukaryotic mitochondrial porin (TC 1.B.8.1) family.

The protein localises to the mitochondrion outer membrane. Functionally, forms a channel through the cell membrane that allows diffusion of small hydrophilic molecules. The channel adopts an open conformation at low or zero membrane potential and a closed conformation at potentials above 30-40 mV. The open state has a weak anion selectivity whereas the closed state is cation-selective. This chain is Mitochondrial outer membrane porin (VDAC1), found in Triticum aestivum (Wheat).